A 244-amino-acid chain; its full sequence is HTH-type transcriptional regulator Cmr (244 aa).

Position 41–160 (41–160) interacts with a nucleoside 3',5'-cyclic phosphate; it reads GSAPLHRDDV…RRWLSSVAQR (120 aa). The HTH crp-type domain occupies 174-237; sequence RPLPAQVAQL…YAVIEITDQH (64 aa). Positions 197 to 216 form a DNA-binding region, H-T-H motif; sequence QRTLAAMLGAQRPSINKILK.

Its function is as follows. Positively regulates the expression of at least groEL2. This is HTH-type transcriptional regulator Cmr (cmr) from Mycobacterium tuberculosis (strain CDC 1551 / Oshkosh).